The following is a 60-amino-acid chain: UPF0181 protein PMI1604 (60 aa).

The protein belongs to the UPF0181 family.

This is UPF0181 protein PMI1604 from Proteus mirabilis (strain HI4320).